The primary structure comprises 260 residues: MANEIVKEMIEAGVHFGHRTSLWNPKMAPYIFGKKNQIHILDIRETLRGLLRAKKYLSQVAAGGSLILFVGTKRQAGEAVEEQSLRCGMPFVSERWLGGTLTNFRTIRSRLGRLEELEALRAGDGINDYSKKMQSSLNREYRKMYRNLNGLRTMNRLPEVMFIVDPGKERNAVREAKRLGITTVALIDTDSDPSQIDLPIPGNDDGIRSVEMIMRELADAVIAGKGQTQTEAAPNAQAAPEAAAPAEQPAEEAAAASSEG.

The tract at residues 225–260 (KGQTQTEAAPNAQAAPEAAAPAEQPAEEAAAASSEG) is disordered. Over residues 231-260 (EAAPNAQAAPEAAAPAEQPAEEAAAASSEG) the composition is skewed to low complexity.

It belongs to the universal ribosomal protein uS2 family.

This is Small ribosomal subunit protein uS2 from Rhodopirellula baltica (strain DSM 10527 / NCIMB 13988 / SH1).